The sequence spans 254 residues: MNCEELTNKLTNFVLSKVGEANAKGVVLGLSGGIDSSLVATICVKALGKDNVLGVIMPEKNSNTQDKEHAELLANQLGIKYTVSDITDVLKSFGAGGYIPTKEFDKMADGNLKPRIRMCILYYFANKNNLLVAGTSNKSEIYMGYGTKYGDLGSDFLLIGNLFKTEVRELSKYLGVPDEIINKAPSAGLWEGQTDEKELGITYELLDKVLMAIEQNKEKEDISKELTVPIEKIEEILNRIESNKHKSQPIPIPN.

29-36 (GLSGGIDS) contributes to the ATP binding site. Residue Asp-35 coordinates Mg(2+). Arg-115 serves as a coordination point for deamido-NAD(+). Thr-135 provides a ligand contact to ATP. Glu-140 is a Mg(2+) binding site. Deamido-NAD(+)-binding residues include Lys-148 and Asp-155. Residues Lys-164 and Ser-186 each coordinate ATP. A deamido-NAD(+)-binding site is contributed by 245 to 246 (HK).

The protein belongs to the NAD synthetase family. In terms of assembly, homodimer.

The enzyme catalyses deamido-NAD(+) + NH4(+) + ATP = AMP + diphosphate + NAD(+) + H(+). It participates in cofactor biosynthesis; NAD(+) biosynthesis; NAD(+) from deamido-NAD(+) (ammonia route): step 1/1. Functionally, catalyzes the ATP-dependent amidation of deamido-NAD to form NAD. Uses ammonia as a nitrogen source. The sequence is that of NH(3)-dependent NAD(+) synthetase from Methanococcus aeolicus (strain ATCC BAA-1280 / DSM 17508 / OCM 812 / Nankai-3).